The primary structure comprises 159 residues: Afifavidin (159 aa).

Residues 1–23 (MRRLASLAVALPLLAVVASPALA) form the signal peptide. One can recognise an Avidin-like domain in the interval 36 to 151 (GVPAVSSSWV…GSDTFTLVNK (116 aa)). Asparagine 46, serine 50, tyrosine 66, asparagine 68, and glycine 74 together coordinate biotin. A disulfide bond links cysteine 75 and cysteine 104. Biotin is bound by residues serine 106, threonine 108, and aspartate 144.

This sequence belongs to the avidin/streptavidin family. In terms of assembly, exhibits a dynamic oligomeric assembly: the apo form self-assembles mostly into toroid-shaped homooctamers, with a small fraction of homodimers, yet upon biotin binding the intact afifavidin consists solely of the dimer.

The protein resides in the secreted. The exact role played by afifavidin is still obscure. Forms a strong non-covalent complex with biotin and 2-iminobiotin. This is Afifavidin from Afifella pfennigii (Rhodobium pfennigii).